The chain runs to 274 residues: Glutamate--cysteine ligase regulatory subunit (274 aa).

N6-acetyllysine is present on K263.

This sequence belongs to the aldo/keto reductase family. Glutamate--cysteine ligase light chain subfamily. Heterodimer of a catalytic heavy chain and a regulatory light chain. In terms of tissue distribution, in all tissues examined. Highest levels in skeletal muscle.

It participates in sulfur metabolism; glutathione biosynthesis; glutathione from L-cysteine and L-glutamate: step 1/2. The sequence is that of Glutamate--cysteine ligase regulatory subunit (GCLM) from Homo sapiens (Human).